Consider the following 316-residue polypeptide: Methionyl-tRNA formyltransferase (316 aa).

(6S)-5,6,7,8-tetrahydrofolate is bound at residue 112–115 (GLLP).

It belongs to the Fmt family.

It carries out the reaction L-methionyl-tRNA(fMet) + (6R)-10-formyltetrahydrofolate = N-formyl-L-methionyl-tRNA(fMet) + (6S)-5,6,7,8-tetrahydrofolate + H(+). In terms of biological role, attaches a formyl group to the free amino group of methionyl-tRNA(fMet). The formyl group appears to play a dual role in the initiator identity of N-formylmethionyl-tRNA by promoting its recognition by IF2 and preventing the misappropriation of this tRNA by the elongation apparatus. In Chlamydia muridarum (strain MoPn / Nigg), this protein is Methionyl-tRNA formyltransferase.